Here is a 346-residue protein sequence, read N- to C-terminus: UDP-N-acetylenolpyruvoylglucosamine reductase (346 aa).

The 172-residue stretch at 18–189 folds into the FAD-binding PCMH-type domain; it reads LRAQARAFIA…VSVVFALKTH (172 aa). Arg165 is an active-site residue. The active-site Proton donor is the Ser240. The active site involves Glu336.

It belongs to the MurB family. Requires FAD as cofactor.

The protein localises to the cytoplasm. The enzyme catalyses UDP-N-acetyl-alpha-D-muramate + NADP(+) = UDP-N-acetyl-3-O-(1-carboxyvinyl)-alpha-D-glucosamine + NADPH + H(+). It participates in cell wall biogenesis; peptidoglycan biosynthesis. Its function is as follows. Cell wall formation. The chain is UDP-N-acetylenolpyruvoylglucosamine reductase from Neisseria meningitidis serogroup A / serotype 4A (strain DSM 15465 / Z2491).